Reading from the N-terminus, the 879-residue chain is Beta-mannosidase (879 aa).

The signal sequence occupies residues 1–19 (MHLHLLLILALFRAGCVVA). 4 N-linked (GlcNAc...) asparagine glycosylation sites follow: asparagine 35, asparagine 77, asparagine 89, and asparagine 113. Cysteine 167 and cysteine 176 are disulfide-bonded. Position 190–192 (190–192 (WDW)) interacts with substrate. N-linked (GlcNAc...) asparagine glycans are attached at residues asparagine 226, asparagine 297, and asparagine 302. Asparagine 456 is a binding site for substrate. Catalysis depends on glutamate 457, which acts as the Proton donor. 3 disulfide bridges follow: cysteine 540–cysteine 629, cysteine 732–cysteine 761, and cysteine 764–cysteine 769. Glutamate 554 acts as the Nucleophile in catalysis. A glycan (N-linked (GlcNAc...) asparagine) is linked at asparagine 736. N-linked (GlcNAc...) asparagine glycosylation is found at asparagine 803 and asparagine 807.

Belongs to the glycosyl hydrolase 2 family. Monomer. As to expression, highest level in liver, high levels in lung, testis, skin and spleen, moderate level in thymus. Activity found in plasma, kidney, liver, spleen, pancreas, brain, testis, epididymis, heart, lung and skeletal muscle.

It localises to the lysosome. It catalyses the reaction Hydrolysis of terminal, non-reducing beta-D-mannose residues in beta-D-mannosides.. It functions in the pathway glycan metabolism; N-glycan degradation. Its function is as follows. Exoglycosidase that cleaves the single beta-linked mannose residue from the non-reducing end of all N-linked glycoprotein oligosaccharides. The sequence is that of Beta-mannosidase from Mus musculus (Mouse).